The following is a 319-amino-acid chain: Phosphoenolpyruvate transferase (319 aa).

Asp-50 serves as a coordination point for 7,8-didemethyl-8-hydroxy-5-deazariboflavin.

The protein belongs to the CofD family. As to quaternary structure, homodimer. Requires Mg(2+) as cofactor.

The enzyme catalyses enolpyruvoyl-2-diphospho-5'-guanosine + 7,8-didemethyl-8-hydroxy-5-deazariboflavin = dehydro coenzyme F420-0 + GMP + H(+). The protein operates within cofactor biosynthesis; coenzyme F420 biosynthesis. Functionally, catalyzes the transfer of the phosphoenolpyruvate moiety from enoylpyruvoyl-2-diphospho-5'-guanosine (EPPG) to 7,8-didemethyl-8-hydroxy-5-deazariboflavin (FO) with the formation of dehydro coenzyme F420-0 and GMP. This chain is Phosphoenolpyruvate transferase, found in Streptomyces coelicolor (strain ATCC BAA-471 / A3(2) / M145).